The primary structure comprises 555 residues: Dihydroxy-acid dehydratase (555 aa).

Residue cysteine 46 coordinates [2Fe-2S] cluster. Residue aspartate 78 participates in Mg(2+) binding. Cysteine 119 provides a ligand contact to [2Fe-2S] cluster. Mg(2+) contacts are provided by aspartate 120 and lysine 121. Position 121 is an N6-carboxylysine (lysine 121). [2Fe-2S] cluster is bound at residue cysteine 191. Glutamate 442 contacts Mg(2+). Residue serine 468 is the Proton acceptor of the active site.

It belongs to the IlvD/Edd family. In terms of assembly, homodimer. [2Fe-2S] cluster is required as a cofactor. Requires Mg(2+) as cofactor.

It carries out the reaction (2R)-2,3-dihydroxy-3-methylbutanoate = 3-methyl-2-oxobutanoate + H2O. The enzyme catalyses (2R,3R)-2,3-dihydroxy-3-methylpentanoate = (S)-3-methyl-2-oxopentanoate + H2O. It participates in amino-acid biosynthesis; L-isoleucine biosynthesis; L-isoleucine from 2-oxobutanoate: step 3/4. Its pathway is amino-acid biosynthesis; L-valine biosynthesis; L-valine from pyruvate: step 3/4. Functions in the biosynthesis of branched-chain amino acids. Catalyzes the dehydration of (2R,3R)-2,3-dihydroxy-3-methylpentanoate (2,3-dihydroxy-3-methylvalerate) into 2-oxo-3-methylpentanoate (2-oxo-3-methylvalerate) and of (2R)-2,3-dihydroxy-3-methylbutanoate (2,3-dihydroxyisovalerate) into 2-oxo-3-methylbutanoate (2-oxoisovalerate), the penultimate precursor to L-isoleucine and L-valine, respectively. The polypeptide is Dihydroxy-acid dehydratase (Thermus thermophilus (strain ATCC 27634 / DSM 579 / HB8)).